The sequence spans 404 residues: Cysteine desulfurase IscS (404 aa).

Pyridoxal 5'-phosphate is bound by residues 75-76 (AT), Asn-155, Gln-183, and 203-205 (SAH). Residue Lys-206 is modified to N6-(pyridoxal phosphate)lysine. Thr-243 is a pyridoxal 5'-phosphate binding site. Cys-328 functions as the Cysteine persulfide intermediate in the catalytic mechanism. Cys-328 contributes to the [2Fe-2S] cluster binding site.

It belongs to the class-V pyridoxal-phosphate-dependent aminotransferase family. NifS/IscS subfamily. Homodimer. Forms a heterotetramer with IscU, interacts with other sulfur acceptors. The cofactor is pyridoxal 5'-phosphate.

It is found in the cytoplasm. The enzyme catalyses (sulfur carrier)-H + L-cysteine = (sulfur carrier)-SH + L-alanine. It participates in cofactor biosynthesis; iron-sulfur cluster biosynthesis. Master enzyme that delivers sulfur to a number of partners involved in Fe-S cluster assembly, tRNA modification or cofactor biosynthesis. Catalyzes the removal of elemental sulfur atoms from cysteine to produce alanine. Functions as a sulfur delivery protein for Fe-S cluster synthesis onto IscU, an Fe-S scaffold assembly protein, as well as other S acceptor proteins. The protein is Cysteine desulfurase IscS of Stutzerimonas stutzeri (strain A1501) (Pseudomonas stutzeri).